A 166-amino-acid chain; its full sequence is uncharacterized protein (166 aa).

Positions 28–55 (SRQVHPPWPVPCKSKLQEQDSSESKESK) are disordered. Over residues 42–55 (KLQEQDSSESKESK) the composition is skewed to basic and acidic residues. The region spanning 67–163 (QNAMLYIENN…NYTPKQFKRT (97 aa)) is the HTH araC/xylS-type domain. 2 DNA-binding regions (H-T-H motif) span residues 84–105 (DTVA…KLAT) and 130–153 (VTET…KKRT).

This is an uncharacterized protein from Pseudoalteromonas carrageenovora (Alteromonas carrageenovora).